The following is a 377-amino-acid chain: MSFELERIDIEKDREFSEIMHGKDAAKERGLLSSFRKDKEAQKIALDSYFGFWGDKCTSEKNDIHQQERFKFYATLTRHYYNLVTDFYEYGWSTSFHFCRFAKDESFSQAIARHEHYIALHAGIREGETVLDVGCGVGGPACQISVFTGANIVGLNNNDYQIQRAKYYSEKKGLSDKLKFIKGDFMQMPFPENSFDKIYSIEATIHAPSLEGVYSEIYRVLKPGGLYASYEWVMLNKYDENDPEHQQIVYGIEIGDSIPKISKIGEAEAALIKVGFEIIHSEELSTKNSPLPWYYYLDGDLRKVRSFRDFISIARMTTIGKWLISSFIGLMEFIGLLPKGSKKVNDILLVAADSLVKAGKKEIFTPMQLWVCRKPLV.

Belongs to the class I-like SAM-binding methyltransferase superfamily. Erg6/SMT family.

It catalyses the reaction lanosterol + S-adenosyl-L-methionine = eburicol + S-adenosyl-L-homocysteine + H(+). The catalysed reaction is eburicol + S-adenosyl-L-methionine = (24Z)-ethylidenelanosterol + S-adenosyl-L-homocysteine + H(+). The protein operates within steroid metabolism. In terms of biological role, catalyzes the transfer of 2 methyl groups from 2 S-adenosyl-methionine molecules to the C-24 of lanosterol, producing first eburicol (24-methylenelanosterol) from lanosterol and then pneumocysterol (24Z-ethylidenelanosterol) from eburicol. This is Sterol 24-C-methyltransferase (erg6) from Pneumocystis carinii (strain B80) (Rat pneumocystis pneumonia agent).